Here is a 568-residue protein sequence, read N- to C-terminus: Protein AF-9 (568 aa).

The YEATS domain maps to 1-138 (MASSCAVQVK…EDFRRKLLKA (138 aa)). Histone H3K9cr binding stretches follow at residues 78 to 80 (YAG) and 106 to 108 (LHL). The interval 138-475 (AGGDPNRSIH…PPPPLLKTNN (338 aa)) is disordered. Low complexity predominate over residues 149–190 (SSSSSSSSSSSSSSSSSSSSSSSSSSSSSSSSSSSSSSSSSS). Basic and acidic residues predominate over residues 202-265 (EHKEKPSKDS…PKPMSKEPKP (64 aa)). A phosphoserine mark is found at Ser288 and Ser294. Residues 295-300 (AKKRKK) carry the Nuclear localization signal motif. Over residues 303–313 (SEALFKSFSSA) the composition is skewed to low complexity. Residues 322 to 349 (ADKKQIKDKSHVKMGKVKIESETSEKKK) are compositionally biased toward basic and acidic residues. Lys339 is covalently cross-linked (Glycyl lysine isopeptide (Lys-Gly) (interchain with G-Cter in SUMO2)). Positions 357–368 (DIVDPNDSDVEE) are enriched in acidic residues. Residues 371 to 395 (SSKSDSEQPSPASSSSSSSSSFTPS) are compositionally biased toward low complexity. A phosphoserine mark is found at Ser412 and Ser419. Acidic residues predominate over residues 414-429 (DNEEESDEVEDNDNDS). Positions 445–461 (VSLSDGSDSESSSASSP) are enriched in low complexity. Position 483 is a phosphoserine (Ser483).

As to quaternary structure, component of the super elongation complex (SEC), at least composed of EAF1, EAF2, CDK9, MLLT3/AF9, AFF (AFF1 or AFF4), the P-TEFb complex and ELL (ELL, ELL2 or ELL3). Interacts with BCOR. Interacts with CBX8. Interacts with ALKBH4. As to expression, enriched in undifferentiated hematopoietic stem cells in fetal liver, cord blood and bone marrow.

The protein resides in the nucleus. Its subcellular location is the chromosome. With respect to regulation, crotonylated lysine binding is strongly inhibited by the peptide XL-07i, carrying a 2-furancarbonyl side chain and capped with a hydrophobic carboxybenzyl group. XL-07i targets the unique pi-pi-pi stacking interaction at the crotonylation recognition site. Chromatin reader component of the super elongation complex (SEC), a complex required to increase the catalytic rate of RNA polymerase II transcription by suppressing transient pausing by the polymerase at multiple sites along the DNA. Specifically recognizes and binds acylated histone H3, with a preference for histone H3 that is crotonylated. Crotonylation marks active promoters and enhancers and confers resistance to transcriptional repressors. Recognizes and binds histone H3 crotonylated at 'Lys-9' (H3K9cr), and with slightly lower affinity histone H3 crotonylated at 'Lys-18' (H3K18cr). Also recognizes and binds histone H3 acetylated and butyrylated at 'Lys-9' (H3K9ac and H3K9bu, respectively), but with lower affinity than crotonylated histone H3. In the SEC complex, MLLT3 is required to recruit the complex to crotonylated histones. Recruitment of the SEC complex to crotonylated histones promotes recruitment of DOT1L on active chromatin to deposit histone H3 'Lys-79' methylation (H3K79me). Plays a key role in hematopoietic stem cell (HSC) maintenance by preserving, rather than conferring, HSC stemness. Acts by binding to the transcription start site of active genes in HSCs and sustaining level of H3K79me2, probably by recruiting DOT1L. The sequence is that of Protein AF-9 from Homo sapiens (Human).